Here is a 116-residue protein sequence, read N- to C-terminus: MKGPSILAVAALALLLVLSVLENSSGAPQRLSEKRNWTPQAMLYLKGAQGHRFISDQSRRKELADRPPPERRNPNLQLLTLPEAAALFLASLEKPQKDEGGDFDKSKLLEDRRFYW.

The signal sequence occupies residues 1-26 (MKGPSILAVAALALLLVLSVLENSSG). A propeptide spanning residues 27-35 (APQRLSEKR) is cleaved from the precursor. Gln-49 carries the post-translational modification Glutamine amide. Propeptides lie at residues 50–116 (GHRF…RFYW) and 74–116 (PNLQ…RFYW). Positions 56 to 73 (DQSRRKELADRPPPERRN) are enriched in basic and acidic residues. A disordered region spans residues 56–75 (DQSRRKELADRPPPERRNPN).

This sequence belongs to the spexin family. Widely expressed; predominantly expressed in epithelial cells in the skin, respiratory, digestive, urinary and reproductive systems, retina, adrenal gland and various brain regions. In the adrenal gland, expressed in parenchymal cells of the cortex and in ganglionic cells and intermingled cortical cells of the medulla. Expressed in the type I glomic cells within the carotid body (at protein level). Widely expressed. Strongly expressed in esophagus, liver, pancreas, kidney, brain, hypothalamus, thyroid and ovary. Expressed in the zona glomerulosa (ZG) and zona fasciculata/reticularis (ZF/R) of the adrenal gland. Also expressed in stomach, lung, skeletal muscle, heart, uterus, spleen, adrenal gland and testis. Weakly expressed in small intestine, thymus, urinary bladder and adenohypophysis. In the brain, is expressed in the Barrington's nucleus, with lesser amount in the ventrolateral caudal periaqueductal gray (PAG) and in the mesopontine tegmentum.

It localises to the secreted. Its subcellular location is the extracellular space. It is found in the cytoplasmic vesicle. The protein resides in the secretory vesicle. Plays a role as a central modulator of cardiovascular and renal function and nociception. Also plays a role in energy metabolism and storage. Inhibits adrenocortical cell proliferation with minor stimulation on corticosteroid release. Functionally, acts as a ligand for galanin receptors GALR2 and GALR3. Intracerebroventricular administration of the peptide induces an increase in arterial blood pressure, a decrease in both heart rate and renal excretion and delayed natriuresis. Intraventricular administration of the peptide induces antinociceptive activity. Intraperitoneal administration of the peptide induces a reduction in food consumption and body weight. Inhibits long chain fatty acid uptake into adipocytes. Also induces contraction of muscarinic-like stomach smooth muscles. In terms of biological role, intracerebroventricular administration of the peptide induces a decrease in heart rate, but no change in arterial pressure, and an increase in urine flow rate. Intraventricular administration of the peptide induces antinociceptive activity. The sequence is that of Spexin (SPX) from Rattus norvegicus (Rat).